The chain runs to 290 residues: ATP synthase gamma chain (290 aa).

Belongs to the ATPase gamma chain family. As to quaternary structure, F-type ATPases have 2 components, CF(1) - the catalytic core - and CF(0) - the membrane proton channel. CF(1) has five subunits: alpha(3), beta(3), gamma(1), delta(1), epsilon(1). CF(0) has three main subunits: a, b and c.

The protein resides in the cell inner membrane. Produces ATP from ADP in the presence of a proton gradient across the membrane. The gamma chain is believed to be important in regulating ATPase activity and the flow of protons through the CF(0) complex. The protein is ATP synthase gamma chain of Dinoroseobacter shibae (strain DSM 16493 / NCIMB 14021 / DFL 12).